Reading from the N-terminus, the 224-residue chain is Cytidylate kinase (224 aa).

11–19 is an ATP binding site; that stretch reads GPAAAGKST.

It belongs to the cytidylate kinase family. Type 1 subfamily.

The protein resides in the cytoplasm. The enzyme catalyses CMP + ATP = CDP + ADP. It carries out the reaction dCMP + ATP = dCDP + ADP. This Geobacillus kaustophilus (strain HTA426) protein is Cytidylate kinase.